Consider the following 426-residue polypeptide: UDP-N-acetylglucosamine 1-carboxyvinyltransferase (426 aa).

22-23 is a binding site for phosphoenolpyruvate; sequence KN. Position 99 (R99) interacts with UDP-N-acetyl-alpha-D-glucosamine. The Proton donor role is filled by C123. C123 bears the 2-(S-cysteinyl)pyruvic acid O-phosphothioketal mark. UDP-N-acetyl-alpha-D-glucosamine-binding positions include 128-132, D313, and I335; that span reads RPIDL.

Belongs to the EPSP synthase family. MurA subfamily.

It localises to the cytoplasm. The catalysed reaction is phosphoenolpyruvate + UDP-N-acetyl-alpha-D-glucosamine = UDP-N-acetyl-3-O-(1-carboxyvinyl)-alpha-D-glucosamine + phosphate. Its pathway is cell wall biogenesis; peptidoglycan biosynthesis. Functionally, cell wall formation. Adds enolpyruvyl to UDP-N-acetylglucosamine. The chain is UDP-N-acetylglucosamine 1-carboxyvinyltransferase from Zymomonas mobilis subsp. mobilis (strain ATCC 31821 / ZM4 / CP4).